A 70-amino-acid polypeptide reads, in one-letter code: Metallothionein-like protein 1 (70 aa).

The protein belongs to the metallothionein superfamily. Type 15 family.

Functionally, metallothioneins have a high content of cysteine residues that bind various heavy metals. This chain is Metallothionein-like protein 1 (MT1), found in Festuca rubra (Red fescue).